A 381-amino-acid chain; its full sequence is Cytochrome b (381 aa).

4 helical membrane-spanning segments follow: residues 33-53 (FGSL…FLAM), 77-98 (WLLR…FLHV), 113-133 (WNIG…GYVL), and 178-198 (FFAF…VHLL). 2 residues coordinate heme b: histidine 83 and histidine 97. Heme b is bound by residues histidine 182 and histidine 196. Histidine 201 contributes to the a ubiquinone binding site. The next 4 helical transmembrane spans lie at 226–246 (IKDA…GLFS), 288–308 (LGGV…PLLH), 320–340 (IFQT…WIGG), and 347–367 (FIII…ALMP).

Belongs to the cytochrome b family. In terms of assembly, the cytochrome bc1 complex contains 11 subunits: 3 respiratory subunits (MT-CYB, CYC1 and UQCRFS1), 2 core proteins (UQCRC1 and UQCRC2) and 6 low-molecular weight proteins (UQCRH/QCR6, UQCRB/QCR7, UQCRQ/QCR8, UQCR10/QCR9, UQCR11/QCR10 and a cleavage product of UQCRFS1). This cytochrome bc1 complex then forms a dimer. It depends on heme b as a cofactor.

Its subcellular location is the mitochondrion inner membrane. Its function is as follows. Component of the ubiquinol-cytochrome c reductase complex (complex III or cytochrome b-c1 complex) that is part of the mitochondrial respiratory chain. The b-c1 complex mediates electron transfer from ubiquinol to cytochrome c. Contributes to the generation of a proton gradient across the mitochondrial membrane that is then used for ATP synthesis. The protein is Cytochrome b (MT-CYB) of Dasykaluta rosamondae (Little red marsupial mouse).